The following is a 521-amino-acid chain: Cyclic AMP-responsive element-binding protein 3-like protein 2 (521 aa).

Residues 1 to 378 (MEVLESGEQS…CKLAGTQTGT (378 aa)) lie on the Cytoplasmic side of the membrane. The residue at position 93 (S93) is a Phosphoserine. Residue K178 forms a Glycyl lysine isopeptide (Lys-Gly) (interchain with G-Cter in SUMO2) linkage. Residue S191 is modified to Phosphoserine. Positions 196 to 264 (SVDQLHLPPT…PHKLQGSGPL (69 aa)) are disordered. Residues 208–220 (SSHSSDSEGSLSP) show a composition bias toward low complexity. Residues 294 to 357 (ALKKIRRKIK…RTLLQQLQKL (64 aa)) enclose the bZIP domain. Residues 296 to 325 (KKIRRKIKNKISAQESRRKKKEYMDSLEKK) are basic motif. The leucine-zipper stretch occupies residues 336–357 (LRKKVEVLENTNRTLLQQLQKL). The chain crosses the membrane as a helical; Signal-anchor for type II membrane protein span at residues 379–399 (CLMVVVLCFAVAFGSLFQGYG). At 400–521 (LYPSATKMAL…ELERRVNATF (122 aa)) the chain is on the lumenal side. The S1P recognition signature appears at 427 to 430 (RNLL). N505 and N518 each carry an N-linked (GlcNAc...) asparagine glycan.

It belongs to the bZIP family. ATF subfamily. Binds DNA as a dimer. Upon ER stress, translocated to the Golgi apparatus, where it is processed by regulated intramembrane proteolysis (RIP) to release the cytosol-facing N-terminal transcription factor domain. The cleavage is performed sequentially by site-1 and site-2 proteases (S1P/MBTPS1 and S2P/MBTPS2). In terms of processing, N-glycosylated. Post-translationally, ubiquitinated by HRD1/SYVN1; undergoes 'Lys-48'-linked ubiquitination, followed by rapid proteasomal degradation under normal conditions. Upon ER stress, SYVN1 E3 ubiquitin-protein ligase dissociates from its substrate, ubiquitination does not occur and CREB3L2 is stabilized.

The protein localises to the endoplasmic reticulum membrane. The protein resides in the nucleus. Functionally, transcription factor involved in unfolded protein response (UPR). In the absence of endoplasmic reticulum (ER) stress, inserted into ER membranes, with N-terminal DNA-binding and transcription activation domains oriented toward the cytosolic face of the membrane. In response to ER stress, transported to the Golgi, where it is cleaved in a site-specific manner by resident proteases S1P/MBTPS1 and S2P/MBTPS2. The released N-terminal cytosolic domain is translocated to the nucleus to effect transcription of specific target genes. Plays a critical role in chondrogenesis by activating the transcription of SEC23A, which promotes the transport and secretion of cartilage matrix proteins, and possibly that of ER biogenesis-related genes. In a neuroblastoma cell line, protects cells from ER stress-induced death. In vitro activates transcription of target genes via direct binding to the CRE site. In Rattus norvegicus (Rat), this protein is Cyclic AMP-responsive element-binding protein 3-like protein 2 (Creb3l2).